The sequence spans 1037 residues: Multidrug resistance protein MdtF (1037 aa).

Residues 1-9 (MANYFIDRP) lie on the Cytoplasmic side of the membrane. The chain crosses the membrane as a helical span at residues 10 to 28 (VFAWVLAIIMMLAGGLAIM). Over 29–339 (NLPVAQYPQI…TPFIEISIQE (311 aa)) the chain is Periplasmic. A helical transmembrane segment spans residues 340–359 (VFKTLVEAIILVFLVMYLFL). Topologically, residues 360–365 (QNFRAT) are cytoplasmic. The chain crosses the membrane as a helical span at residues 366-385 (IIPTIAVPVVILGTFAILSA). Over 386–391 (VGFTIN) the chain is Periplasmic. A helical transmembrane segment spans residues 392 to 413 (TLTMFGMVLAIGLLVDDAIVVV). At 414–441 (ENVERVIAEDKLPPKEATHKSMGQIQRA) the chain is on the cytoplasmic side. Residues 442–460 (LVGIAVVLSAVFMPMAFMS) traverse the membrane as a helical segment. The Periplasmic segment spans residues 461-473 (GATGEIYRQFSIT). The chain crosses the membrane as a helical span at residues 474–496 (LISSMLLSVFVAMSLTPALCATI). Residues 497–536 (LKAAPEGGHKPNALFARFNTLFEKSTQHYTDSTRSLLRCT) are Cytoplasmic-facing. The chain crosses the membrane as a helical span at residues 537–555 (GRYMVVYLLICAGMAVLFL). At 556 to 870 (RTPTSFLPEE…SYQEALSSNQ (315 aa)) the chain is on the periplasmic side. A helical membrane pass occupies residues 871–890 (APALYAISLVVVFLALAALY). Residues 891–896 (ESWSIP) lie on the Cytoplasmic side of the membrane. The helical transmembrane segment at 897–916 (FSVMLVVPLGVVGALLATDL) threads the bilayer. The Periplasmic portion of the chain corresponds to 917 to 922 (RGLSND). A helical transmembrane segment spans residues 923–944 (VYFQVGLLTTIGLSAKNAILIV). The Cytoplasmic segment spans residues 945-972 (EFAVEMMQKEGKTPIEAIIEAARMRLRP). The helical transmembrane segment at 973-991 (ILMTSLAFILGVLPLVISH) threads the bilayer. Residues 992 to 1004 (GAGSGAQNAVGTG) are Periplasmic-facing. A helical membrane pass occupies residues 1005 to 1027 (VMGGMFAATVLAIYFVPVFFVVV). At 1028–1037 (EHLFARFKKA) the chain is on the cytoplasmic side.

Belongs to the resistance-nodulation-cell division (RND) (TC 2.A.6) family. In terms of assembly, homotrimer. Part of the tripartite efflux system MdtEF-TolC, which is composed of an inner membrane transporter, MdtF, a membrane fusion protein, MdtE, and an outer membrane component, TolC. The complex forms a large protein conduit and can translocate molecules across both the inner and outer membranes.

The protein resides in the cell inner membrane. Part of the tripartite efflux system MdtEF-TolC, which confers resistance to compounds such as rhodamine 6G, erythromycin, doxorubicin, ethidium bromide, TPP, SDS, deoxycholate, crystal violet and benzalkonium. The sequence is that of Multidrug resistance protein MdtF (mdtF) from Escherichia coli (strain K12).